The chain runs to 147 residues: 3-dehydroquinate dehydratase (147 aa).

Catalysis depends on Y23, which acts as the Proton acceptor. 3 residues coordinate substrate: N75, H81, and D88. Catalysis depends on H101, which acts as the Proton donor. Substrate is bound by residues L102–S103 and R112.

This sequence belongs to the type-II 3-dehydroquinase family. Homododecamer.

It carries out the reaction 3-dehydroquinate = 3-dehydroshikimate + H2O. It participates in metabolic intermediate biosynthesis; chorismate biosynthesis; chorismate from D-erythrose 4-phosphate and phosphoenolpyruvate: step 3/7. Functionally, catalyzes a trans-dehydration via an enolate intermediate. This is 3-dehydroquinate dehydratase from Stutzerimonas stutzeri (strain A1501) (Pseudomonas stutzeri).